We begin with the raw amino-acid sequence, 100 residues long: Signal recognition particle 19 kDa protein (100 aa).

Belongs to the SRP19 family. As to quaternary structure, part of the signal recognition particle protein translocation system, which is composed of SRP and FtsY. Archaeal SRP consists of a 7S RNA molecule of 300 nucleotides and two protein subunits: SRP54 and SRP19.

It is found in the cytoplasm. Its function is as follows. Involved in targeting and insertion of nascent membrane proteins into the cytoplasmic membrane. Binds directly to 7S RNA and mediates binding of the 54 kDa subunit of the SRP. The polypeptide is Signal recognition particle 19 kDa protein (Caldivirga maquilingensis (strain ATCC 700844 / DSM 13496 / JCM 10307 / IC-167)).